The following is a 255-amino-acid chain: Zinc-finger homeodomain protein 6 (255 aa).

The segment at 1-35 is disordered; sequence MEFRGHDEPVDEMGVAYGRTPPSSSSSPAASASAG. Low complexity predominate over residues 21–35; it reads PPSSSSSPAASASAG. The ZF-HD dimerization-type; degenerate zinc-finger motif lies at 45-93; it reads YHECLRNHAAAMGGHVVDGCREFMPMPGDAADALKCAACGCHRSFHRKD. The segment covering 106-126 has biased composition (pro residues); the sequence is PSPPTPRVPLLMPPPQPQPHP. Disordered regions lie at residues 106-181 and 226-255; these read PSPP…KFTP and NNKS…QQQQ. Residues 139-153 show a composition bias toward low complexity; it reads YHHTPSGSGGTTTES. Residues 172-235 constitute a DNA-binding region (homeobox); it reads RKRFRTKFTP…NNKSSIGSSS (64 aa). Residues 240 to 255 are compositionally biased toward low complexity; that stretch reads RRQPQEQQSQQQQQQQ.

As to quaternary structure, homo- and heterodimer with other ZFHD proteins.

Its subcellular location is the nucleus. Its function is as follows. Putative transcription factor. This is Zinc-finger homeodomain protein 6 (ZHD6) from Oryza sativa subsp. japonica (Rice).